A 158-amino-acid polypeptide reads, in one-letter code: Glutamyl-tRNA(Gln) amidotransferase subunit C, mitochondrial (158 aa).

This sequence belongs to the GatC family. Subunit of the heterotrimeric GatCAB amidotransferase (AdT) complex, composed of A, B and C subunits.

The protein localises to the mitochondrion. The catalysed reaction is L-glutamyl-tRNA(Gln) + L-glutamine + ATP + H2O = L-glutaminyl-tRNA(Gln) + L-glutamate + ADP + phosphate + H(+). Functionally, allows the formation of correctly charged Gln-tRNA(Gln) through the transamidation of misacylated Glu-tRNA(Gln) in the mitochondria. The reaction takes place in the presence of glutamine and ATP through an activated gamma-phospho-Glu-tRNA(Gln). This is Glutamyl-tRNA(Gln) amidotransferase subunit C, mitochondrial from Drosophila grimshawi (Hawaiian fruit fly).